A 142-amino-acid chain; its full sequence is Galactose-6-phosphate isomerase subunit LacA (142 aa).

Belongs to the LacAB/RpiB family. Heteromultimeric protein consisting of LacA and LacB.

It catalyses the reaction aldehydo-D-galactose 6-phosphate = keto-D-tagatose 6-phosphate. Its pathway is carbohydrate metabolism; D-galactose 6-phosphate degradation; D-tagatose 6-phosphate from D-galactose 6-phosphate: step 1/1. This is Galactose-6-phosphate isomerase subunit LacA from Staphylococcus haemolyticus (strain JCSC1435).